The primary structure comprises 203 residues: bMERB domain-containing protein 1 (203 aa).

A bMERB domain is found at 3–149 (LKQSLSVHLE…EQEEDKEMAD (147 aa)). The segment at 160 to 186 (KVTKSSASSRAEKKAEPPPSKPTVAKT) is disordered.

This chain is bMERB domain-containing protein 1 (Bmerb1), found in Rattus norvegicus (Rat).